A 251-amino-acid chain; its full sequence is Lactose phosphotransferase system repressor (251 aa).

Positions Lys3–Ser58 constitute an HTH deoR-type domain. A DNA-binding region (H-T-H motif) is located at residues Ile20–Asp39.

In terms of biological role, repressor of the lactose catabolism operon. Galactose-6-phosphate is the inducer. The protein is Lactose phosphotransferase system repressor (lacR) of Streptococcus mutans serotype c (strain ATCC 700610 / UA159).